A 238-amino-acid polypeptide reads, in one-letter code: Ribosomal RNA small subunit methyltransferase E 1 (238 aa).

This sequence belongs to the RNA methyltransferase RsmE family.

It localises to the cytoplasm. The enzyme catalyses uridine(1498) in 16S rRNA + S-adenosyl-L-methionine = N(3)-methyluridine(1498) in 16S rRNA + S-adenosyl-L-homocysteine + H(+). Specifically methylates the N3 position of the uracil ring of uridine 1498 (m3U1498) in 16S rRNA. Acts on the fully assembled 30S ribosomal subunit. The chain is Ribosomal RNA small subunit methyltransferase E 1 (rsmE1) from Borreliella burgdorferi (strain ATCC 35210 / DSM 4680 / CIP 102532 / B31) (Borrelia burgdorferi).